The primary structure comprises 446 residues: Neuropeptide Y receptor type 5 (446 aa).

At 1–42 (MGSEIPDYYNKTLASENNTVATRNSGFPVWEDYKGSVDDLQY) the chain is on the extracellular side. N-linked (GlcNAc...) asparagine glycosylation is found at Asn-10 and Asn-17. The helical transmembrane segment at 43–63 (FLIGLYTFVSLLGFMGNLLIL) threads the bilayer. Over 64-77 (MAVMRKRNQKTTVN) the chain is Cytoplasmic. The chain crosses the membrane as a helical span at residues 78-98 (FLIGNLAFSDILVVLFCSPFT). Residues 99–117 (LTSVLLDQWMFGKVMCHIM) are Extracellular-facing. Cys-114 and Cys-198 are disulfide-bonded. The chain crosses the membrane as a helical span at residues 118–138 (PFLQCVTVLVSTLILISIAIV). At 139–156 (RYHMIKHPVSNNLTANHG) the chain is on the cytoplasmic side. The helical transmembrane segment at 157–177 (YFLIATVWTLGLAICSPLPVF) threads the bilayer. Residues 178–208 (HSLVELQESFGSAWLSSRYLCVESWPSDSYR) are Extracellular-facing. Residues 209-229 (IAFTISLLLVQYILPLVCLTV) form a helical membrane-spanning segment. Residues 230–369 (SHTSVCRTIS…RKRSRSVFYR (140 aa)) are Cytoplasmic-facing. Residues 297–325 (RPAPAGPALESREGRPPGKVGSMQSQPPP) form a disordered region. A helical transmembrane segment spans residues 370–390 (LTVLILVFAVSWMPLHLFHVV). The Extracellular portion of the chain corresponds to 391 to 407 (TDFNDNLISNRHFKLVY). Residues 408–428 (CICHLLGMMSCCLNPILYGFL) form a helical membrane-spanning segment. At 429–446 (NNGIKADLMSLIHCLHVS) the chain is on the cytoplasmic side. A lipid anchor (S-palmitoyl cysteine) is attached at Cys-442.

The protein belongs to the G-protein coupled receptor 1 family.

It is found in the cell membrane. Functionally, receptor for neuropeptide Y and peptide YY. The activity of this receptor is mediated by G proteins that inhibit adenylate cyclase activity. Seems to be associated with food intake. Could be involved in feeding disorders. The chain is Neuropeptide Y receptor type 5 (NPY5R) from Sus scrofa (Pig).